A 35-amino-acid polypeptide reads, in one-letter code: Dolichyl-diphosphooligosaccharide--protein glycosyltransferase subunit 4C (35 aa).

Topologically, residues M1 to G8 are lumenal. Residues F9 to M29 traverse the membrane as a helical segment. The Cytoplasmic segment spans residues A30 to E35.

Belongs to the OST4 family. As to quaternary structure, component of the oligosaccharyltransferase (OST) complex.

Its subcellular location is the endoplasmic reticulum membrane. Its function is as follows. Subunit of the oligosaccharyl transferase (OST) complex that catalyzes the initial transfer of a defined glycan (Glc(3)Man(9)GlcNAc(2) in eukaryotes) from the lipid carrier dolichol-pyrophosphate to an asparagine residue within an Asn-X-Ser/Thr consensus motif in nascent polypeptide chains, the first step in protein N-glycosylation. N-glycosylation occurs cotranslationally and the complex associates with the Sec61 complex at the channel-forming translocon complex that mediates protein translocation across the endoplasmic reticulum (ER). All subunits are required for a maximal enzyme activity. The protein is Dolichyl-diphosphooligosaccharide--protein glycosyltransferase subunit 4C (OST4C) of Arabidopsis thaliana (Mouse-ear cress).